A 723-amino-acid chain; its full sequence is Fatty acid oxidation complex subunit alpha (723 aa).

Positions 1–189 (MIYQAETLQV…KIGLLDAVVD (189 aa)) are enoyl-CoA hydratase/isomerase. Asp296 provides a ligand contact to substrate. A 3-hydroxyacyl-CoA dehydrogenase region spans residues 311–723 (NKETQRAAVL…FYGAQQQGSI (413 aa)). Residues Met325, Asp344, 401-403 (VVE), Lys408, and Ser430 each bind NAD(+). The For 3-hydroxyacyl-CoA dehydrogenase activity role is filled by His451. Asn454 serves as a coordination point for NAD(+). 2 residues coordinate substrate: Asn501 and Tyr661.

The protein in the N-terminal section; belongs to the enoyl-CoA hydratase/isomerase family. In the C-terminal section; belongs to the 3-hydroxyacyl-CoA dehydrogenase family. As to quaternary structure, heterotetramer of two alpha chains (FadB) and two beta chains (FadA).

The enzyme catalyses a (3S)-3-hydroxyacyl-CoA + NAD(+) = a 3-oxoacyl-CoA + NADH + H(+). The catalysed reaction is a (3S)-3-hydroxyacyl-CoA = a (2E)-enoyl-CoA + H2O. It carries out the reaction a 4-saturated-(3S)-3-hydroxyacyl-CoA = a (3E)-enoyl-CoA + H2O. It catalyses the reaction (3S)-3-hydroxybutanoyl-CoA = (3R)-3-hydroxybutanoyl-CoA. The enzyme catalyses a (3Z)-enoyl-CoA = a 4-saturated (2E)-enoyl-CoA. The catalysed reaction is a (3E)-enoyl-CoA = a 4-saturated (2E)-enoyl-CoA. The protein operates within lipid metabolism; fatty acid beta-oxidation. In terms of biological role, involved in the aerobic and anaerobic degradation of long-chain fatty acids via beta-oxidation cycle. Catalyzes the formation of 3-oxoacyl-CoA from enoyl-CoA via L-3-hydroxyacyl-CoA. It can also use D-3-hydroxyacyl-CoA and cis-3-enoyl-CoA as substrate. In Vibrio vulnificus (strain YJ016), this protein is Fatty acid oxidation complex subunit alpha.